The sequence spans 268 residues: Indole-3-glycerol phosphate synthase (268 aa).

Belongs to the TrpC family.

It carries out the reaction 1-(2-carboxyphenylamino)-1-deoxy-D-ribulose 5-phosphate + H(+) = (1S,2R)-1-C-(indol-3-yl)glycerol 3-phosphate + CO2 + H2O. It participates in amino-acid biosynthesis; L-tryptophan biosynthesis; L-tryptophan from chorismate: step 4/5. This is Indole-3-glycerol phosphate synthase from Acinetobacter baumannii (strain ACICU).